Consider the following 529-residue polypeptide: Probable serine/threonine protein phosphatase 2A regulatory subunit B''epsilon (529 aa).

Residues 60–110 (KSGTPTNKSKNLPSVFLSSSTPPLSPRSSSGSPRFSRQRTSPPSLHSPLRS) are disordered. Low complexity predominate over residues 71–109 (LPSVFLSSSTPPLSPRSSSGSPRFSRQRTSPPSLHSPLR). The EF-hand domain occupies 381–416 (SSEPSLEYWFKCVDLDGNGVITSNEMQFFFEEQLHR). The Ca(2+) site is built by Asp-394, Asp-396, Asn-398, and Glu-405. The segment at 507–529 (EEDVDEVSNGSADVWDEPLEPPF) is disordered. The span at 520-529 (VWDEPLEPPF) shows a compositional bias: acidic residues.

In terms of assembly, PP2A consists of a common heterodimeric core enzyme, composed of a 36 kDa catalytic subunit (subunit C) and a 65 kDa constant regulatory subunit (PR65 or subunit A), that associates with a variety of regulatory subunits. Proteins that associate with the core dimer include three families of regulatory subunits B (the R2/B/PR55/B55, R3/B''/PR72/PR130/PR59 and R5/B'/B56 families) and cell signaling molecules.

Probable regulatory subunit of type 2A protein phosphatase. The polypeptide is Probable serine/threonine protein phosphatase 2A regulatory subunit B''epsilon (B''EPSILON) (Arabidopsis thaliana (Mouse-ear cress)).